Here is a 393-residue protein sequence, read N- to C-terminus: MSAPPKRFGLIVKQKEEPKRAPVRVSSVFGDDDDDEAPATATNTSSASVIRIQKAAEREHQKAEAEDPTIFDYDGNYDEIQAIKNEKKEEARKADKNKESKYAEAIIKAHARRQLEQFSREERQQIKEREKEAGEFDDKEVFVTGAYRKQQEEVKKYREQEAEEAAFNDMTSVQKQKMWEMGMGRTLLNDLARDPTAIKQRKMEKKNVRKREDSGDEEEQKEDVKKKEEPKKKSIYDTDSEDDEKKSKAPEAPKKNFEGELKAGLNLVTKKATTHAERIRQRNFTPTPPSSDDEAPKPAPRAVGDHRRSTSPRRSRDHAQRNQREKTKSKSPEPPKAQKTSLKDKLKPKRIDKAARLDGLKAILAQRNTEKDIEEARQRYFERREQGLVVPPL.

The segment at 1 to 49 (MSAPPKRFGLIVKQKEEPKRAPVRVSSVFGDDDDDEAPATATNTSSASV) is disordered. Over residues 39–48 (ATATNTSSAS) the composition is skewed to low complexity. Residues 76-166 (NYDEIQAIKN…YREQEAEEAA (91 aa)) adopt a coiled-coil conformation. The interval 187–350 (LLNDLARDPT…SLKDKLKPKR (164 aa)) is disordered. Positions 199 to 209 (KQRKMEKKNVR) are enriched in basic residues. Basic and acidic residues-rich tracts occupy residues 222-236 (EDVK…KSIY), 243-261 (DEKK…EGEL), 317-333 (DHAQ…KSPE), and 341-350 (SLKDKLKPKR).

The protein belongs to the NSRP1 family.

This is Nuclear speckle splicing regulatory protein 1 homolog from Caenorhabditis briggsae.